We begin with the raw amino-acid sequence, 155 residues long: Small ribosomal subunit protein uS7c (155 aa).

This sequence belongs to the universal ribosomal protein uS7 family. In terms of assembly, part of the 30S ribosomal subunit.

It localises to the plastid. Its subcellular location is the chloroplast. In terms of biological role, one of the primary rRNA binding proteins, it binds directly to 16S rRNA where it nucleates assembly of the head domain of the 30S subunit. The sequence is that of Small ribosomal subunit protein uS7c (rps7) from Silene latifolia (White campion).